The following is a 528-amino-acid chain: Low affinity inorganic phosphate transporter 4 (528 aa).

The Cytoplasmic portion of the chain corresponds to 1–18; it reads MALEVLEALDSARTQWYH. Residues 19–39 traverse the membrane as a helical segment; it reads VTAIVIAGMGFFTDAYDLFCI. At 40 to 68 the chain is on the extracellular side; that stretch reads TTVSKLLGRLYYFDPSTGKPGKLPNNVNN. Residues 69–89 form a helical membrane-spanning segment; it reads LVTGVALVGTLSGQLFFGYLG. At 90-96 the chain is on the cytoplasmic side; the sequence is DKLGRKK. Residues 97–117 traverse the membrane as a helical segment; that stretch reads VYGVTLILMVACAICSGLSFG. Residues 118-122 are Extracellular-facing; the sequence is ASAKS. Residues 123 to 143 form a helical membrane-spanning segment; that stretch reads VMGTLCFFRFWLGFGIGGDYP. Residues 144-158 lie on the Cytoplasmic side of the membrane; the sequence is LSATIMSEYANKRTR. The chain crosses the membrane as a helical span at residues 159–179; sequence GAFIAAVFAMQGVGIIFAGLV. Topologically, residues 180-208 are extracellular; the sequence is SMCLSAGFKASYHAPSFHDDPIMSTQPQG. The chain crosses the membrane as a helical span at residues 209 to 229; it reads DLMWRLVLMIGAVPAAMTYYW. At 230–292 the chain is on the cytoplasmic side; it reads RMKMPETGRY…NEFFTRHGRH (63 aa). The chain crosses the membrane as a helical span at residues 293 to 313; the sequence is LIGTMTSWFLLDIAFYSQNLT. Residues 314-341 lie on the Extracellular side of the membrane; that stretch reads QKDIFPAMGLIDKDFEMNAIQEVFETSR. A helical membrane pass occupies residues 342–362; the sequence is AMFVIALFGTFPGYWFTVFFI. Residues 363–371 are Cytoplasmic-facing; sequence EKLGRYKIQ. Residues 372–392 traverse the membrane as a helical segment; sequence LIGFFMMSVFMFIIGVKYDYL. The Extracellular segment spans residues 393–401; sequence RNENSHMFA. The chain crosses the membrane as a helical span at residues 402-422; it reads LLYGLTFFFANFGPNSTTFVL. Residues 423 to 433 lie on the Cytoplasmic side of the membrane; sequence PAELFPTRVRS. A helical transmembrane segment spans residues 434–454; that stretch reads TCHALSAAAGKAGAMVGAFGI. Residues 455–467 lie on the Extracellular side of the membrane; that stretch reads QNYTQKGEQKQIK. N-linked (GlcNAc...) asparagine glycosylation occurs at asparagine 456. The helical transmembrane segment at 468-488 threads the bilayer; it reads HAMMILAVTNLIGFFCSFLVT. Over 489-528 the chain is Cytoplasmic; the sequence is ETKGRSLEEISGEDGRESELTPTPPNNRVPTRQEPRSETM. 2 stretches are compositionally biased toward basic and acidic residues: residues 496–507 and 519–528; these read EEISGEDGRESE and TRQEPRSETM. Residues 496-528 form a disordered region; it reads EEISGEDGRESELTPTPPNNRVPTRQEPRSETM.

Belongs to the major facilitator superfamily. Phosphate:H(+) symporter (TC 2.A.1.9) family. As to expression, expressed only in mycorrhizal roots, exclusively in cortical cells containing arbuscules, upon arbuscular mycorrhizal (AM) symbiosis with AM fungi (e.g. Gigaspora margarita and Funnelliformis mosseae). Also observed in root tips of non-mycorrhizal roots, in a phosphate (Pi) depended-manner, highest expression levels being observed in low Pi conditions.

The protein resides in the cell membrane. It carries out the reaction phosphate(in) + H(+)(in) = phosphate(out) + H(+)(out). In terms of biological role, low-affinity transporter for external inorganic phosphate (Pi) probably involved in the acquisition of phosphate released by arbuscular mycorrhizal (AM) fungi (e.g. Gigaspora margarita and Funnelliformis mosseae) during AM symbiosis; required for propper mycorrhizal arbuscule morphology. Acts as a Pi-sensing machinery at the root tip level, independently of AM fungi, involved in the regulation of early root branching and lateral roots formation. This Lotus japonicus (Lotus corniculatus var. japonicus) protein is Low affinity inorganic phosphate transporter 4.